A 305-amino-acid chain; its full sequence is Serine/threonine-protein kinase 16 (305 aa).

The N-myristoyl glycine moiety is linked to residue Gly-2. S-palmitoyl cysteine attachment occurs at residues Cys-6 and Cys-8. One can recognise a Protein kinase domain in the interval Tyr-20–Leu-293. ATP-binding positions include Leu-26–Val-34 and Lys-49. The active-site Proton acceptor is Asp-148. An activation loop region spans residues Asp-166 to Glu-202. Thr-185 bears the Phosphothreonine; by autocatalysis mark. The residue at position 197 (Ser-197) is a Phosphoserine; by autocatalysis. A Phosphotyrosine; by autocatalysis modification is found at Tyr-198.

Belongs to the protein kinase superfamily. Ser/Thr protein kinase family. As to quaternary structure, monomer. Interacts with DRG1 (via its N-terminal); the interaction phosphorylates DRG1. Post-translationally, mainly autophosphorylated on serine/threonine residues. Also autophosphorylated on Tyr-198. In terms of processing, it is uncertain whether palmitoylation is on Cys-6 and/or Cys-8. Ubiquitously expressed at very low levels.

It is found in the cytoplasm. Its subcellular location is the perinuclear region. The protein localises to the membrane. The enzyme catalyses L-seryl-[protein] + ATP = O-phospho-L-seryl-[protein] + ADP + H(+). It carries out the reaction L-threonyl-[protein] + ATP = O-phospho-L-threonyl-[protein] + ADP + H(+). The catalysed reaction is L-tyrosyl-[protein] + ATP = O-phospho-L-tyrosyl-[protein] + ADP + H(+). In terms of biological role, membrane-associated protein kinase that phosphorylates on serine and threonine residues. In vitro substrates include DRG1, ENO1 and EIF4EBP1. Also autophosphorylates. May be involved in secretory vesicle trafficking or intracellular signaling. May have a role in regulating stromal-epithelial interactions that occur during ductal morphogenesis in the mammary gland. May be involved in TGF-beta signaling. Able to autophosphorylate on Tyr residue; it is however unclear whether it has tyrosine-protein kinase toward other proteins. The sequence is that of Serine/threonine-protein kinase 16 (STK16) from Homo sapiens (Human).